An 855-amino-acid chain; its full sequence is DNA mismatch repair protein MutS (855 aa).

613–620 (GPNMGGKS) contributes to the ATP binding site. The segment at 796–816 (TTSLPHEMPSQQSGKPASPMQ) is disordered.

This sequence belongs to the DNA mismatch repair MutS family.

In terms of biological role, this protein is involved in the repair of mismatches in DNA. It is possible that it carries out the mismatch recognition step. This protein has a weak ATPase activity. This chain is DNA mismatch repair protein MutS, found in Pseudomonas aeruginosa (strain ATCC 15692 / DSM 22644 / CIP 104116 / JCM 14847 / LMG 12228 / 1C / PRS 101 / PAO1).